Consider the following 378-residue polypeptide: uncharacterized protein (378 aa).

This is an uncharacterized protein from Orgyia pseudotsugata multicapsid polyhedrosis virus (OpMNPV).